The primary structure comprises 403 residues: Phosphoglycerate kinase (403 aa).

Substrate-binding positions include 24-26 (DLN), Arg-39, 62-65 (HLGR), Arg-121, and Arg-161. Residues Lys-211, Gly-299, Glu-330, and 359 to 362 (GGDS) contribute to the ATP site.

It belongs to the phosphoglycerate kinase family. In terms of assembly, monomer.

It is found in the cytoplasm. It catalyses the reaction (2R)-3-phosphoglycerate + ATP = (2R)-3-phospho-glyceroyl phosphate + ADP. The protein operates within carbohydrate degradation; glycolysis; pyruvate from D-glyceraldehyde 3-phosphate: step 2/5. The protein is Phosphoglycerate kinase of Rhodococcus erythropolis (strain PR4 / NBRC 100887).